The sequence spans 70 residues: Large ribosomal subunit protein bL31 (70 aa).

Zn(2+)-binding residues include cysteine 16, cysteine 18, cysteine 36, and cysteine 39.

It belongs to the bacterial ribosomal protein bL31 family. Type A subfamily. As to quaternary structure, part of the 50S ribosomal subunit. It depends on Zn(2+) as a cofactor.

Functionally, binds the 23S rRNA. In Fervidobacterium nodosum (strain ATCC 35602 / DSM 5306 / Rt17-B1), this protein is Large ribosomal subunit protein bL31.